We begin with the raw amino-acid sequence, 540 residues long: Glucose-6-phosphate isomerase (540 aa).

The active-site Proton donor is the Glu350. Residues His381 and Lys503 contribute to the active site.

This sequence belongs to the GPI family.

The protein resides in the cytoplasm. It carries out the reaction alpha-D-glucose 6-phosphate = beta-D-fructose 6-phosphate. Its pathway is carbohydrate biosynthesis; gluconeogenesis. It functions in the pathway carbohydrate degradation; glycolysis; D-glyceraldehyde 3-phosphate and glycerone phosphate from D-glucose: step 2/4. Functionally, catalyzes the reversible isomerization of glucose-6-phosphate to fructose-6-phosphate. This chain is Glucose-6-phosphate isomerase, found in Paraburkholderia xenovorans (strain LB400).